A 470-amino-acid polypeptide reads, in one-letter code: Methylenetetrahydrofolate--tRNA-(uracil-5-)-methyltransferase TrmFO (470 aa).

10-15 is a binding site for FAD; it reads GAGLAG.

This sequence belongs to the MnmG family. TrmFO subfamily. FAD serves as cofactor.

It is found in the cytoplasm. It catalyses the reaction uridine(54) in tRNA + (6R)-5,10-methylene-5,6,7,8-tetrahydrofolate + NADH + H(+) = 5-methyluridine(54) in tRNA + (6S)-5,6,7,8-tetrahydrofolate + NAD(+). It carries out the reaction uridine(54) in tRNA + (6R)-5,10-methylene-5,6,7,8-tetrahydrofolate + NADPH + H(+) = 5-methyluridine(54) in tRNA + (6S)-5,6,7,8-tetrahydrofolate + NADP(+). Its function is as follows. Catalyzes the folate-dependent formation of 5-methyl-uridine at position 54 (M-5-U54) in all tRNAs. This chain is Methylenetetrahydrofolate--tRNA-(uracil-5-)-methyltransferase TrmFO, found in Prochlorococcus marinus (strain MIT 9301).